The chain runs to 429 residues: Aspartate--tRNA(Asp/Asn) ligase (429 aa).

Residue Glu-166 coordinates L-aspartate. The tract at residues 188-191 (QLYK) is aspartate. Arg-210 is an L-aspartate binding site. ATP-binding positions include 210 to 212 (RAE), 218 to 220 (RHL), and Glu-352. Mg(2+) is bound by residues Glu-352 and Ser-355. Positions 355 and 359 each coordinate L-aspartate. 400-403 (GAER) provides a ligand contact to ATP.

The protein belongs to the class-II aminoacyl-tRNA synthetase family. Type 2 subfamily. Homodimer. The cofactor is Mg(2+).

The protein resides in the cytoplasm. The catalysed reaction is tRNA(Asx) + L-aspartate + ATP = L-aspartyl-tRNA(Asx) + AMP + diphosphate. Aspartyl-tRNA synthetase with relaxed tRNA specificity since it is able to aspartylate not only its cognate tRNA(Asp) but also tRNA(Asn). Reaction proceeds in two steps: L-aspartate is first activated by ATP to form Asp-AMP and then transferred to the acceptor end of tRNA(Asp/Asn). This is Aspartate--tRNA(Asp/Asn) ligase from Methanocorpusculum labreanum (strain ATCC 43576 / DSM 4855 / Z).